A 322-amino-acid chain; its full sequence is Ribosomal RNA small subunit methyltransferase H (322 aa).

S-adenosyl-L-methionine contacts are provided by residues Gly47–His49, Asp67, Phe93, Asp112, and Gln119.

It belongs to the methyltransferase superfamily. RsmH family.

The protein localises to the cytoplasm. It carries out the reaction cytidine(1402) in 16S rRNA + S-adenosyl-L-methionine = N(4)-methylcytidine(1402) in 16S rRNA + S-adenosyl-L-homocysteine + H(+). Its function is as follows. Specifically methylates the N4 position of cytidine in position 1402 (C1402) of 16S rRNA. The polypeptide is Ribosomal RNA small subunit methyltransferase H (Stenotrophomonas maltophilia (strain R551-3)).